The chain runs to 113 residues: Transmembrane protein 256 (113 aa).

The first 29 residues, 1 to 29, serve as a signal peptide directing secretion; it reads MAGVGAAFRRLGALSGAGALGLASYGAHG. Residues 30 to 63 are Extracellular-facing; that stretch reads AQFPDAYGKELFDKANKHHFLHSLALLGVPSCRK. N6-acetyllysine is present on Lys-43. The helical transmembrane segment at 64–84 threads the bilayer; it reads PVWAGLLLASGTTLFCTSFYY. The Cytoplasmic portion of the chain corresponds to 85–92; the sequence is QALSGDTS. A helical transmembrane segment spans residues 93–113; sequence IQTLGPVGGSLLILGWLALAF.

It belongs to the TMEM256 family.

The protein resides in the membrane. In Mus musculus (Mouse), this protein is Transmembrane protein 256 (Tmem256).